Reading from the N-terminus, the 384-residue chain is Ribonucleoside-diphosphate reductase small chain (384 aa).

Residues Asp-130, Glu-161, and His-164 each coordinate Fe cation. Tyr-168 is an active-site residue. Fe cation contacts are provided by Glu-224, Glu-258, and His-261.

The protein belongs to the ribonucleoside diphosphate reductase small chain family. Heterodimer of a large and a small subunit. It depends on Fe cation as a cofactor.

It catalyses the reaction a 2'-deoxyribonucleoside 5'-diphosphate + [thioredoxin]-disulfide + H2O = a ribonucleoside 5'-diphosphate + [thioredoxin]-dithiol. Functionally, provides the precursors necessary for DNA synthesis. Catalyzes the biosynthesis of deoxyribonucleotides from the corresponding ribonucleotides. The protein is Ribonucleoside-diphosphate reductase small chain of Spisula solidissima (Atlantic surf-clam).